The sequence spans 208 residues: Large ribosomal subunit protein uL3 (208 aa).

Positions Arg-123–Pro-146 are disordered.

The protein belongs to the universal ribosomal protein uL3 family. In terms of assembly, part of the 50S ribosomal subunit. Forms a cluster with proteins L14 and L19.

In terms of biological role, one of the primary rRNA binding proteins, it binds directly near the 3'-end of the 23S rRNA, where it nucleates assembly of the 50S subunit. This is Large ribosomal subunit protein uL3 from Streptococcus thermophilus (strain CNRZ 1066).